The sequence spans 472 residues: Pyridine nucleotide-disulfide oxidoreductase domain-containing protein 1 (472 aa).

It belongs to the class-I pyridine nucleotide-disulfide oxidoreductase family. PYROXD1 subfamily. Requires FAD as cofactor.

In terms of biological role, probable oxidoreductase. The chain is Pyridine nucleotide-disulfide oxidoreductase domain-containing protein 1 from Drosophila melanogaster (Fruit fly).